The sequence spans 349 residues: ATP phosphoribosyltransferase regulatory subunit (349 aa).

The interval 327-349 is disordered; sequence GRGRGVRPRRASARGGRARARPR. A compositionally biased stretch (basic residues) spans 330 to 349; sequence RGVRPRRASARGGRARARPR.

Belongs to the class-II aminoacyl-tRNA synthetase family. HisZ subfamily. In terms of assembly, heteromultimer composed of HisG and HisZ subunits.

The protein localises to the cytoplasm. Its pathway is amino-acid biosynthesis; L-histidine biosynthesis; L-histidine from 5-phospho-alpha-D-ribose 1-diphosphate: step 1/9. Functionally, required for the first step of histidine biosynthesis. May allow the feedback regulation of ATP phosphoribosyltransferase activity by histidine. This chain is ATP phosphoribosyltransferase regulatory subunit, found in Anaeromyxobacter sp. (strain K).